The chain runs to 288 residues: Protein PXR1 (288 aa).

Residues 25 to 72 (QSRFGHKHLMRFGWQPGQGLGTQPVQSMKTHIKVSIKDDNLGLGAKLK) form the G-patch domain. The disordered stretch occupies residues 147–258 (SYSQMEKDSS…TSIPESVSTR (112 aa)). Over residues 157–166 (SDEESDDDED) the composition is skewed to acidic residues. 2 stretches are compositionally biased toward basic residues: residues 169–185 (KKHKIEKKEAKKSKKRK) and 195–214 (KKKKKSKKDKKEKKSKKDKK). The span at 238–256 (RTASIESSTSATSIPESVS) shows a compositional bias: low complexity.

This sequence belongs to the PINX1 family.

Its subcellular location is the nucleus. The protein resides in the nucleolus. Involved in rRNA-processing at A0, A1 and A2 sites and negatively regulates telomerase. In Candida glabrata (strain ATCC 2001 / BCRC 20586 / JCM 3761 / NBRC 0622 / NRRL Y-65 / CBS 138) (Yeast), this protein is Protein PXR1 (PXR1).